A 250-amino-acid chain; its full sequence is DNA repair protein RecO (250 aa).

It belongs to the RecO family.

Its function is as follows. Involved in DNA repair and RecF pathway recombination. The protein is DNA repair protein RecO of Beijerinckia indica subsp. indica (strain ATCC 9039 / DSM 1715 / NCIMB 8712).